A 236-amino-acid chain; its full sequence is Purine nucleoside phosphorylase DeoD-type 2 (236 aa).

H5 is an a purine D-ribonucleoside binding site. Residues G21, R25, R44, and 88–91 (RVGS) contribute to the phosphate site. A purine D-ribonucleoside is bound by residues 180 to 182 (DME) and 204 to 205 (SD). The Proton donor role is filled by D205.

The protein belongs to the PNP/UDP phosphorylase family. Homohexamer; trimer of homodimers.

The enzyme catalyses a purine D-ribonucleoside + phosphate = a purine nucleobase + alpha-D-ribose 1-phosphate. It catalyses the reaction a purine 2'-deoxy-D-ribonucleoside + phosphate = a purine nucleobase + 2-deoxy-alpha-D-ribose 1-phosphate. Its function is as follows. Catalyzes the reversible phosphorolytic breakdown of the N-glycosidic bond in the beta-(deoxy)ribonucleoside molecules, with the formation of the corresponding free purine bases and pentose-1-phosphate. This chain is Purine nucleoside phosphorylase DeoD-type 2, found in Vibrio vulnificus (strain CMCP6).